Here is a 390-residue protein sequence, read N- to C-terminus: Enoyl-[acyl-carrier-protein] reductase [NADH], chloroplastic (390 aa).

A chloroplast-targeting transit peptide spans 1 to 74 (MAATAASSLQ…CKRPFSFSTR (74 aa)). Positions 53 and 170 each coordinate NADP(+). Ser239 acts as the Proton donor in catalysis. Lys282 and Ser314 together coordinate NADP(+). Lys282 (lowers pKa of active site Tyr) is an active-site residue.

Belongs to the short-chain dehydrogenases/reductases (SDR) family. FabI subfamily. In terms of assembly, homotetramer. Expressed in flowers and siliques and at lower levels in roots and leaves (at protein level).

Its subcellular location is the plastid. It localises to the chloroplast. The catalysed reaction is a 2,3-saturated acyl-[ACP] + NAD(+) = a (2E)-enoyl-[ACP] + NADH + H(+). Its pathway is lipid metabolism; fatty acid biosynthesis. Its activity is regulated as follows. Inhibited by the phytotoxin cyperin and the synthetic antimicrobial compound triclosan. Functionally, catalyzes the NAD-dependent reduction of a carbon-carbon double bond in an enoyl moiety that is covalently linked to an acyl carrier protein (ACP). Catalyzes the last reduction step in the de novo synthesis cycle of fatty acids. Involved in the elongation cycle of fatty acids which are used in lipid metabolism. Required for normal plant growth. In Arabidopsis thaliana (Mouse-ear cress), this protein is Enoyl-[acyl-carrier-protein] reductase [NADH], chloroplastic (MOD1).